A 459-amino-acid polypeptide reads, in one-letter code: Ribulose bisphosphate carboxylase large chain (459 aa).

Position 4 is an N6,N6,N6-trimethyllysine (Lys-4). Substrate contacts are provided by Asn-113 and Thr-163. Lys-165 acts as the Proton acceptor in catalysis. Substrate is bound at residue Lys-167. Mg(2+) contacts are provided by Lys-191, Asp-193, and Glu-194. N6-carboxylysine is present on Lys-191. The active-site Proton acceptor is the His-284. The substrate site is built by Arg-285, His-317, and Ser-369.

Belongs to the RuBisCO large chain family. Type I subfamily. Heterohexadecamer of 8 large chains and 8 small chains; disulfide-linked. The disulfide link is formed within the large subunit homodimers. Mg(2+) is required as a cofactor. Post-translationally, the disulfide bond which can form in the large chain dimeric partners within the hexadecamer appears to be associated with oxidative stress and protein turnover.

It localises to the plastid. It is found in the chloroplast. It carries out the reaction 2 (2R)-3-phosphoglycerate + 2 H(+) = D-ribulose 1,5-bisphosphate + CO2 + H2O. It catalyses the reaction D-ribulose 1,5-bisphosphate + O2 = 2-phosphoglycolate + (2R)-3-phosphoglycerate + 2 H(+). In terms of biological role, ruBisCO catalyzes two reactions: the carboxylation of D-ribulose 1,5-bisphosphate, the primary event in carbon dioxide fixation, as well as the oxidative fragmentation of the pentose substrate in the photorespiration process. Both reactions occur simultaneously and in competition at the same active site. This is Ribulose bisphosphate carboxylase large chain from Micranthes integrifolia (Wholeleaf saxifrage).